The chain runs to 121 residues: Large ribosomal subunit protein uL22 (121 aa).

Belongs to the universal ribosomal protein uL22 family. In terms of assembly, part of the 50S ribosomal subunit.

Its function is as follows. This protein binds specifically to 23S rRNA; its binding is stimulated by other ribosomal proteins, e.g. L4, L17, and L20. It is important during the early stages of 50S assembly. It makes multiple contacts with different domains of the 23S rRNA in the assembled 50S subunit and ribosome. Functionally, the globular domain of the protein is located near the polypeptide exit tunnel on the outside of the subunit, while an extended beta-hairpin is found that lines the wall of the exit tunnel in the center of the 70S ribosome. This is Large ribosomal subunit protein uL22 from Parasynechococcus marenigrum (strain WH8102).